The sequence spans 215 residues: Leucyl/phenylalanyl-tRNA--protein transferase (215 aa).

Belongs to the L/F-transferase family.

The protein localises to the cytoplasm. The enzyme catalyses N-terminal L-lysyl-[protein] + L-leucyl-tRNA(Leu) = N-terminal L-leucyl-L-lysyl-[protein] + tRNA(Leu) + H(+). The catalysed reaction is N-terminal L-arginyl-[protein] + L-leucyl-tRNA(Leu) = N-terminal L-leucyl-L-arginyl-[protein] + tRNA(Leu) + H(+). It catalyses the reaction L-phenylalanyl-tRNA(Phe) + an N-terminal L-alpha-aminoacyl-[protein] = an N-terminal L-phenylalanyl-L-alpha-aminoacyl-[protein] + tRNA(Phe). Functionally, functions in the N-end rule pathway of protein degradation where it conjugates Leu, Phe and, less efficiently, Met from aminoacyl-tRNAs to the N-termini of proteins containing an N-terminal arginine or lysine. The protein is Leucyl/phenylalanyl-tRNA--protein transferase of Campylobacter jejuni subsp. jejuni serotype O:6 (strain 81116 / NCTC 11828).